A 1502-amino-acid polypeptide reads, in one-letter code: MMAKNKEPRPPSYTISIVGLSGTEKDKGNCGVGKSCLCNRFVRSKADEYYPEHTSVLSTIDFGGRVVNNDHFLYWGDIIQNSEDGVECKIHVIEQTEFIDDQTFLPHRSTNLQPYIKRAAASKLQSAEKLMYICTDQLGLEQDFEQKQMPEGKLNVDGFLLCIDVSQGCNRKFDDQLKFVNNLFVQLSKSKKPVIIAATKCDECVDHYLREVQAFASNKKNLLVVETSARFNVNIETCFTALVQMLDKTRSKPKIIPYLDAYKTQRQLVVTATDKFEKLVQTVRDYHATWKTVSNKLKNHPDYEEYINLEGTRKARNTFSKHIEQLKQEHIRKRREEYINTLPRAFNTLLPNLEEIEHLNWSEALKLMEKRADFQLCFVVLEKTPWDETDHIDKINDRRIPFDLLSTLEAEKVYQNHVQHLISEKRRVEMKEKFKKTLEKIQFISPGQPWEEVMCFVMEDEAYKYITEADSKEVYGRHQREIVEKAKEEFQEMLFEHSELFYDLDLNATPSSDKMSEIHTVLSEEPRYKALQKLAPDRESLLLKHIGFVYHPTKETCLSGQNCTDIKVEQLLASSLLQLDHGRLRLYHDSTNIDKVNLFILGKDGLAQELANEIRTQSTDDEYALDGKIYELDLRPVDAKSPYFLSQLWTAAFKPHGCFCVFNSIESLSFIGEFIGKIRTEASQIRKDKYMANLPFTLILANQRDSISKNLPILRHQGQQLANKLQCPFVDVPAGTYPRKFNETQIKQALRGVLESVKHNLDVVSPIPANKDLSEADLRIVMCAMCGDPFSVDLILSPFLDSHSCSAAQAGQNNSLMLDKIIGEKRRRIQITILSYHSSIGVRKDELVHGYILVYSAKRKASMGMLRAFLSEVQDTIPVQLVAVTDSQADFFENEAIKELMTEGEHIATEITAKFTALYSLSQYHRQTEVFTLFFSDVLEKKNMIENSYLSDNTRESTHQSEDVFLPSPRDCFPYNNYPDSDDDTEAPPPYSPIGDDVQLLPTPSDRSRYRLDLEGNEYPIHSTPNCHDHERNHKVPPPIKPKPVVPKTNVKKLDPNLLKTIEAGIGKNPRKQTSRVPLAHPEDMDPSDNYAEPIDTIFKQKGYSDEIYVVPDDSQNRIKIRNSFVNNTQGDEENGFSDRTSKSHGERRPSKYKYKSKTLFSKAKSYYRRTHSDASDDEAFTTSKTKRKGRHRGSEEDPLLSPVETWKGGIDNPAITSDQELDDKKMKKKTHKVKEDKKQKKKTKNFNPPTRRNWESNYFGMPLQDLVTAEKPIPLFVEKCVEFIEDTGLCTEGLYRVSGNKTDQDNIQKQFDQDHNINLVSMEVTVNAVAGALKAFFADLPDPLIPYSLHPELLEAAKIPDKTERLHALKEIVKKFHPVNYDVFRYVITHLNRVSQQHKINLMTADNLSICFWPTLMRPDFENREFLSTTKIHQSVVETFIQQCQFFFYNGEIVETTNIVAPPPPSNPGQLVEPMVPLQLPPPLQPQLIQPQLQTDPLGII.

4 consecutive FF domains span residues 267-325 (QLVV…HIEQ), 366-420 (KLME…HVQH), 427-481 (RVEM…HQRE), and 482-548 (IVEK…HIGF). Tyrosine 550 is modified (3'-nitrotyrosine). Phosphoserine occurs at positions 590 and 765. The pG1 pseudoGTPase domain occupies 590–763 (STNIDKVNLF…LESVKHNLDV (174 aa)). Residues 779–944 (RIVMCAMCGD…FSDVLEKKNM (166 aa)) enclose the pG2 pseudoGTPase domain. Serine 951 and serine 968 each carry phosphoserine. 3 disordered regions span residues 975 to 1004 (YNNYPDSDDDTEAPPPYSPIGDDVQLLPTP), 1022 to 1050 (HSTPNCHDHERNHKVPPPIKPKPVVPKTN), and 1069 to 1089 (NPRKQTSRVPLAHPEDMDPSD). Pro residues predominate over residues 1036-1045 (VPPPIKPKPV). Serine 1115 bears the Phosphoserine mark. Disordered regions lie at residues 1125–1156 (FVNNTQGDEENGFSDRTSKSHGERRPSKYKYK) and 1168–1254 (YRRT…TRRN). Residues 1140–1150 (RTSKSHGERRP) show a composition bias toward basic and acidic residues. 5 positions are modified to phosphoserine: serine 1173, serine 1176, serine 1195, serine 1202, and serine 1218. The region spanning 1262–1449 (MPLQDLVTAE…TFIQQCQFFF (188 aa)) is the Rho-GAP domain.

In terms of assembly, may interact with RASA1/p120GAP. Detected in skin fibroblasts (at protein level).

The protein resides in the cytoplasm. It is found in the cell membrane. Its function is as follows. GTPase-activating protein for Rho family members. In Homo sapiens (Human), this protein is Rho GTPase-activating protein 5 (ARHGAP5).